The chain runs to 384 residues: D-galactosamine-6-phosphate deaminase AgaS (384 aa).

2 SIS domains span residues Leu-45–Phe-197 and Ser-215–Pro-364.

This sequence belongs to the SIS family. AgaS subfamily.

The catalysed reaction is D-galactosamine 6-phosphate + H2O = D-tagatopyranose 1-phosphate + NH4(+). In terms of biological role, catalyzes the isomerization-deamination of galactosamine 6-phosphate to form tagatofuranose 6-phosphate and ammonium ion. The chain is D-galactosamine-6-phosphate deaminase AgaS from Escherichia coli.